The chain runs to 589 residues: DNA ligase (589 aa).

Glu-250 lines the ATP pocket. Lys-252 functions as the N6-AMP-lysine intermediate in the catalytic mechanism. Arg-257, Arg-272, Glu-302, Phe-342, Arg-417, and Lys-423 together coordinate ATP.

It belongs to the ATP-dependent DNA ligase family. Requires Mg(2+) as cofactor.

The enzyme catalyses ATP + (deoxyribonucleotide)n-3'-hydroxyl + 5'-phospho-(deoxyribonucleotide)m = (deoxyribonucleotide)n+m + AMP + diphosphate.. Functionally, DNA ligase that seals nicks in double-stranded DNA during DNA replication, DNA recombination and DNA repair. In Cenarchaeum symbiosum (strain A), this protein is DNA ligase.